The primary structure comprises 179 residues: Large ribosomal subunit protein uL5 (179 aa).

Belongs to the universal ribosomal protein uL5 family. As to quaternary structure, part of the 50S ribosomal subunit; part of the 5S rRNA/L5/L18/L25 subcomplex. Contacts the 5S rRNA and the P site tRNA. Forms a bridge to the 30S subunit in the 70S ribosome.

Functionally, this is one of the proteins that bind and probably mediate the attachment of the 5S RNA into the large ribosomal subunit, where it forms part of the central protuberance. In the 70S ribosome it contacts protein S13 of the 30S subunit (bridge B1b), connecting the 2 subunits; this bridge is implicated in subunit movement. Contacts the P site tRNA; the 5S rRNA and some of its associated proteins might help stabilize positioning of ribosome-bound tRNAs. This chain is Large ribosomal subunit protein uL5, found in Pectobacterium atrosepticum (strain SCRI 1043 / ATCC BAA-672) (Erwinia carotovora subsp. atroseptica).